We begin with the raw amino-acid sequence, 462 residues long: L-seryl-tRNA(Sec) selenium transferase (462 aa).

An N6-(pyridoxal phosphate)lysine modification is found at Lys293.

This sequence belongs to the SelA family. Pyridoxal 5'-phosphate serves as cofactor.

The protein localises to the cytoplasm. It catalyses the reaction L-seryl-tRNA(Sec) + selenophosphate + H(+) = L-selenocysteinyl-tRNA(Sec) + phosphate. It participates in aminoacyl-tRNA biosynthesis; selenocysteinyl-tRNA(Sec) biosynthesis; selenocysteinyl-tRNA(Sec) from L-seryl-tRNA(Sec) (bacterial route): step 1/1. Functionally, converts seryl-tRNA(Sec) to selenocysteinyl-tRNA(Sec) required for selenoprotein biosynthesis. The sequence is that of L-seryl-tRNA(Sec) selenium transferase from Clostridium botulinum (strain 657 / Type Ba4).